Consider the following 147-residue polypeptide: Siroheme decarboxylase NirG subunit (147 aa).

Belongs to the Ahb/Nir family. In terms of assembly, probably forms a complex composed of NirD, NirL, NirG and NirH. All proteins are required for the total conversion of siroheme to didecarboxysiroheme.

It catalyses the reaction siroheme + 2 H(+) = 12,18-didecarboxysiroheme + 2 CO2. Its pathway is porphyrin-containing compound metabolism. Functionally, involved in heme d1 biosynthesis. Catalyzes the decarboxylation of siroheme into didecarboxysiroheme. The sequence is that of Siroheme decarboxylase NirG subunit from Pseudomonas aeruginosa (strain ATCC 15692 / DSM 22644 / CIP 104116 / JCM 14847 / LMG 12228 / 1C / PRS 101 / PAO1).